The sequence spans 232 residues: MNKEDLKRQAAARALDEVRDGMKIGLGTGSTAKHFVELLGEKVRAGLDVIGVPTSEVTRADAERCGIRLTTLDEIDRLDLTVDGADEIDPRLELIKGGGGALLREKIVAAASDRMIVIADETKWVDCLGHFPLPVEVIPFGLAATRRAIEQACAEVGASGRLQLREGKDGHAFVTDGGHWIIDAHLGRIPDAPRLAQLLSAIPGVVEHGLFIGIASTVVLAGTDGIRTVERA.

Substrate contacts are provided by residues 28 to 31 (TGST), 83 to 86 (DGAD), and 96 to 99 (KGGG). E105 functions as the Proton acceptor in the catalytic mechanism. Residue K123 participates in substrate binding.

Belongs to the ribose 5-phosphate isomerase family. As to quaternary structure, homodimer.

The catalysed reaction is aldehydo-D-ribose 5-phosphate = D-ribulose 5-phosphate. The protein operates within carbohydrate degradation; pentose phosphate pathway; D-ribose 5-phosphate from D-ribulose 5-phosphate (non-oxidative stage): step 1/1. Its function is as follows. Catalyzes the reversible conversion of ribose-5-phosphate to ribulose 5-phosphate. The polypeptide is Ribose-5-phosphate isomerase A (Rhodopseudomonas palustris (strain HaA2)).